We begin with the raw amino-acid sequence, 418 residues long: Glutamyl-tRNA reductase (418 aa).

Substrate is bound by residues 49–52 (TCNR), Ser-108, 113–115 (EPQ), and Gln-119. The Nucleophile role is filled by Cys-50. 188 to 193 (GAGETI) is an NADP(+) binding site.

The protein belongs to the glutamyl-tRNA reductase family. Homodimer.

The catalysed reaction is (S)-4-amino-5-oxopentanoate + tRNA(Glu) + NADP(+) = L-glutamyl-tRNA(Glu) + NADPH + H(+). Its pathway is porphyrin-containing compound metabolism; protoporphyrin-IX biosynthesis; 5-aminolevulinate from L-glutamyl-tRNA(Glu): step 1/2. Functionally, catalyzes the NADPH-dependent reduction of glutamyl-tRNA(Glu) to glutamate 1-semialdehyde (GSA). This Aliivibrio salmonicida (strain LFI1238) (Vibrio salmonicida (strain LFI1238)) protein is Glutamyl-tRNA reductase.